The following is a 185-amino-acid chain: MKDKIIDNAITLFSEKGYDGTTLDDISKSVNIKKASLYYHYDNKEEIYRKSVENCFNYFIDFLLRNHDDNYSIDGLYQFLFKFIFDVDERYIKLYVQLSSAPEALNSEIKHHLQEINTTLHDELIKYYDPTHIALDKEDFINLILLFLETWYFRASFSQKFGIIEDSKNRFKDQVYSLLNVFLKK.

In terms of domain architecture, HTH tetR-type spans 1–59 (MKDKIIDNAITLFSEKGYDGTTLDDISKSVNIKKASLYYHYDNKEEIYRKSVENCFNYF). Residues 22–41 (TLDDISKSVNIKKASLYYHY) constitute a DNA-binding region (H-T-H motif).

As to quaternary structure, homodimer.

Represses transcription of the icaADBC operon necessary for biofilm production. The protein is Biofilm operon icaADBC HTH-type negative transcriptional regulator IcaR (icaR) of Staphylococcus epidermidis (strain ATCC 35984 / DSM 28319 / BCRC 17069 / CCUG 31568 / BM 3577 / RP62A).